Reading from the N-terminus, the 199-residue chain is GTP cyclohydrolase-2 (199 aa).

Arg-49 to Glu-53 lines the GTP pocket. Zn(2+) is bound by residues Cys-54, Cys-65, and Cys-67. Residues Gln-70, Glu-92–Arg-94, and Thr-114 each bind GTP. Asp-126 functions as the Proton acceptor in the catalytic mechanism. The active-site Nucleophile is the Arg-128. GTP contacts are provided by Thr-149 and Lys-154.

This sequence belongs to the GTP cyclohydrolase II family. Zn(2+) serves as cofactor.

The catalysed reaction is GTP + 4 H2O = 2,5-diamino-6-hydroxy-4-(5-phosphoribosylamino)-pyrimidine + formate + 2 phosphate + 3 H(+). Its pathway is cofactor biosynthesis; riboflavin biosynthesis; 5-amino-6-(D-ribitylamino)uracil from GTP: step 1/4. Catalyzes the conversion of GTP to 2,5-diamino-6-ribosylamino-4(3H)-pyrimidinone 5'-phosphate (DARP), formate and pyrophosphate. This is GTP cyclohydrolase-2 from Baumannia cicadellinicola subsp. Homalodisca coagulata.